The following is a 190-amino-acid chain: MTETPNTSSEEIQTSEPSPDNELQVLQQENANLKAELQEQNDRYLMALAEAENSRKRLQKERTEMMQYAVENTLMDFLPPIESMEKALGFASQASEEVKNWAIGFQMILQQFKQIFEEKGVVEYSSKGELFNPYLHEAVEIEETTTIPEETILEEFTKGYKIGDRPIRVAKVKVAKLPAKGNSDSNEEKE.

The span at 1–18 shows a compositional bias: polar residues; the sequence is MTETPNTSSEEIQTSEPS. The disordered stretch occupies residues 1-21; it reads MTETPNTSSEEIQTSEPSPDN.

Belongs to the GrpE family. As to quaternary structure, homodimer.

It is found in the cytoplasm. Its function is as follows. Participates actively in the response to hyperosmotic and heat shock by preventing the aggregation of stress-denatured proteins, in association with DnaK and GrpE. It is the nucleotide exchange factor for DnaK and may function as a thermosensor. Unfolded proteins bind initially to DnaJ; upon interaction with the DnaJ-bound protein, DnaK hydrolyzes its bound ATP, resulting in the formation of a stable complex. GrpE releases ADP from DnaK; ATP binding to DnaK triggers the release of the substrate protein, thus completing the reaction cycle. Several rounds of ATP-dependent interactions between DnaJ, DnaK and GrpE are required for fully efficient folding. This is Protein GrpE from Chlamydia trachomatis serovar A (strain ATCC VR-571B / DSM 19440 / HAR-13).